Here is a 165-residue protein sequence, read N- to C-terminus: Large ribosomal subunit protein uL10 (165 aa).

This sequence belongs to the universal ribosomal protein uL10 family. Part of the ribosomal stalk of the 50S ribosomal subunit. The N-terminus interacts with L11 and the large rRNA to form the base of the stalk. The C-terminus forms an elongated spine to which L12 dimers bind in a sequential fashion forming a multimeric L10(L12)X complex.

Functionally, forms part of the ribosomal stalk, playing a central role in the interaction of the ribosome with GTP-bound translation factors. In Shewanella piezotolerans (strain WP3 / JCM 13877), this protein is Large ribosomal subunit protein uL10.